Here is a 235-residue protein sequence, read N- to C-terminus: Eukaryotic translation initiation factor 4E-1 (235 aa).

The disordered stretch occupies residues 1-52 (MVVEDSMKATSAEDLSNSIANQNPRGRGGDEDEELEEGEIVGDDDLDSSNLS). The segment covering 13–24 (EDLSNSIANQNP) has biased composition (polar residues). Over residues 30–47 (DEDEELEEGEIVGDDDLD) the composition is skewed to acidic residues. EIF4G-binding stretches follow at residues 60 to 63 (HPLE) and 70 to 106 (FDNP…NNIH). Residues 78–83 (KQATWG), K110, and 128–129 (WE) each bind mRNA. C133 and C171 form a disulfide bridge. The EIF4G-binding stretch occupies residues 154–163 (YTLLAMIGEQ). Residues 178 to 183 (RSGQDK) and 223 to 227 (KKFDR) each bind mRNA.

The protein belongs to the eukaryotic initiation factor 4E family. EIF4F is a multi-subunit complex, the composition of which varies with external and internal environmental conditions. It is composed of at least EIF4A, EIF4E and EIF4G. EIF4E is also known to interact with other partners. Interacts directly with eIF4G. In higher plants two isoforms of EIF4F have been identified, named isoform EIF4F and isoform EIF(iso)4F. Isoform EIF4F has subunits p220 and p26, whereas isoform EIF(iso)4F has subunits p82 and p28. In terms of assembly, (Microbial infection) Interacts with potyvirus viral genome-linked protein (VPg); this interaction is possible in susceptible hosts but impaired in resistant plants. In terms of processing, according to the redox status, the Cys-133-Cys-171 disulfide bridge may have a role in regulating protein function by affecting its ability to bind capped mRNA.

The protein localises to the nucleus. The protein resides in the cytoplasm. Functionally, component of the protein complex eIF4F, which is involved in the recognition of the mRNA cap, ATP-dependent unwinding of 5'-terminal secondary structure and recruitment of mRNA to the ribosome. Recognizes and binds the 7-methylguanosine-containing mRNA cap during an early step in the initiation of protein synthesis and facilitates ribosome binding by inducing the unwinding of the mRNAs secondary structures. Key component of recessive resistance to potyviruses and Tombusviridae genus Carmovirus such as melon necrotic spot virus (MNSV). Its function is as follows. (Microbial infection) Susceptibility host factor required for viral infection by recruiting viral RNAs, including uncapped and non-polyadenylated RNA, to the host ribosomal complex via an interaction with viral genome-linked protein (VPg). The polypeptide is Eukaryotic translation initiation factor 4E-1 (Cucumis melo (Muskmelon)).